Consider the following 601-residue polypeptide: Proteasome-associated ATPase (601 aa).

Residues 1–15 show a composition bias toward gly residues; sequence MSGPRSGSGSGGSTG. Residues 1 to 29 form a disordered region; the sequence is MSGPRSGSGSGGSTGRPGDADSQRSAYEK. A compositionally biased stretch (basic and acidic residues) spans 18–29; that stretch reads GDADSQRSAYEK. A coiled-coil region spans residues 19–106; it reads DADSQRSAYE…LKEEVDRLAQ (88 aa). ATP is bound at residue 289 to 294; the sequence is GCGKTL. The interval 600 to 601 is docks into pockets in the proteasome alpha-ring; it reads YL.

The protein belongs to the AAA ATPase family. Homohexamer. Assembles into a hexameric ring structure that caps the 20S proteasome core. Strongly interacts with the prokaryotic ubiquitin-like protein Pup through a hydrophobic interface; the interacting region of ARC lies in its N-terminal coiled-coil domain. There is one Pup binding site per ARC hexamer ring. Upon ATP-binding, the C-terminus of ARC interacts with the alpha-rings of the proteasome core, possibly by binding to the intersubunit pockets.

It participates in protein degradation; proteasomal Pup-dependent pathway. Functionally, ATPase which is responsible for recognizing, binding, unfolding and translocation of pupylated proteins into the bacterial 20S proteasome core particle. May be essential for opening the gate of the 20S proteasome via an interaction with its C-terminus, thereby allowing substrate entry and access to the site of proteolysis. Thus, the C-termini of the proteasomal ATPase may function like a 'key in a lock' to induce gate opening and therefore regulate proteolysis. This chain is Proteasome-associated ATPase, found in Parafrankia sp. (strain EAN1pec).